Consider the following 305-residue polypeptide: Orotidine 5'-phosphate decarboxylase (305 aa).

Lysine 108 functions as the Proton donor in the catalytic mechanism.

Belongs to the OMP decarboxylase family. Type 2 subfamily.

It catalyses the reaction orotidine 5'-phosphate + H(+) = UMP + CO2. It functions in the pathway pyrimidine metabolism; UMP biosynthesis via de novo pathway; UMP from orotate: step 2/2. The chain is Orotidine 5'-phosphate decarboxylase from Caldicellulosiruptor bescii (strain ATCC BAA-1888 / DSM 6725 / KCTC 15123 / Z-1320) (Anaerocellum thermophilum).